Here is a 244-residue protein sequence, read N- to C-terminus: Phosphoadenosine 5'-phosphosulfate reductase (244 aa).

Cys-239 acts as the Nucleophile; cysteine thiosulfonate intermediate in catalysis.

Belongs to the PAPS reductase family. CysH subfamily.

The protein resides in the cytoplasm. The enzyme catalyses [thioredoxin]-disulfide + sulfite + adenosine 3',5'-bisphosphate + 2 H(+) = [thioredoxin]-dithiol + 3'-phosphoadenylyl sulfate. The protein operates within sulfur metabolism; hydrogen sulfide biosynthesis; sulfite from sulfate: step 3/3. Catalyzes the formation of sulfite from phosphoadenosine 5'-phosphosulfate (PAPS) using thioredoxin as an electron donor. This is Phosphoadenosine 5'-phosphosulfate reductase from Zymomonas mobilis subsp. mobilis (strain ATCC 31821 / ZM4 / CP4).